A 365-amino-acid polypeptide reads, in one-letter code: tRNA/tmRNA (uracil-C(5))-methyltransferase (365 aa).

Positions 189, 217, 222, 238, and 298 each coordinate S-adenosyl-L-methionine. The active-site Nucleophile is the Cys-323. Glu-357 (proton acceptor) is an active-site residue.

It belongs to the class I-like SAM-binding methyltransferase superfamily. RNA M5U methyltransferase family. TrmA subfamily.

It catalyses the reaction uridine(54) in tRNA + S-adenosyl-L-methionine = 5-methyluridine(54) in tRNA + S-adenosyl-L-homocysteine + H(+). The enzyme catalyses uridine(341) in tmRNA + S-adenosyl-L-methionine = 5-methyluridine(341) in tmRNA + S-adenosyl-L-homocysteine + H(+). Dual-specificity methyltransferase that catalyzes the formation of 5-methyluridine at position 54 (m5U54) in all tRNAs, and that of position 341 (m5U341) in tmRNA (transfer-mRNA). The sequence is that of tRNA/tmRNA (uracil-C(5))-methyltransferase from Shewanella pealeana (strain ATCC 700345 / ANG-SQ1).